The following is a 134-amino-acid chain: uncharacterized protein (134 aa).

Residues 13 to 35 (FFIAFSAYLVVILLMTAVSVYYL) traverse the membrane as a helical segment.

It is found in the membrane. This is an uncharacterized protein from Archaeoglobus fulgidus (strain ATCC 49558 / DSM 4304 / JCM 9628 / NBRC 100126 / VC-16).